The following is a 373-amino-acid chain: Putative citrate synthase 2 (373 aa).

Catalysis depends on residues His-250 and Glu-303.

This sequence belongs to the citrate synthase family.

The enzyme catalyses oxaloacetate + acetyl-CoA + H2O = citrate + CoA + H(+). Its pathway is carbohydrate metabolism; tricarboxylic acid cycle; isocitrate from oxaloacetate: step 1/2. The polypeptide is Putative citrate synthase 2 (citA) (Mycobacterium bovis (strain ATCC BAA-935 / AF2122/97)).